The sequence spans 401 residues: Nodal homolog 3-B (401 aa).

The N-terminal stretch at 1–18 is a signal peptide; that stretch reads MALLNLFFCLVFSSPLMA. Residues 19 to 274 constitute a propeptide that is removed on maturation; that stretch reads MPPVLQGRKS…KVNGFRRLRR (256 aa). 4 N-linked (GlcNAc...) asparagine glycosylation sites follow: asparagine 168, asparagine 337, asparagine 341, and asparagine 344. 2 cysteine pairs are disulfide-bonded: cysteine 299-cysteine 365 and cysteine 328-cysteine 396.

The protein belongs to the TGF-beta family. Monomer. The propeptide region interacts with bmp4 in a non-covalent manner. Expressed in the dorsal marginal region of late blastula, becoming restricted to the dorsal blastopore lip (Spemann organizer) at the early gastrula stage.

It localises to the secreted. Functionally, exhibits mesoderm-dorsalizing activity and neural-inducing activity, but lacks mesoderm-inducing activity. Regulates the expression of specific mesodermal and neural genes. Induces convergent extension movements at the embryonic midline by activating the fgf signaling pathway to induce t/bra expression in the organizer region. Acts with wnt11 to induce Spemann organizer cells and induce axis formation. The unprocessed protein antagonizes bmp-signaling. The chain is Nodal homolog 3-B (nodal3-b) from Xenopus laevis (African clawed frog).